The chain runs to 547 residues: Chaperonin GroEL (547 aa).

Residues Thr-30–Pro-33, Lys-51, Asp-87–Thr-91, Gly-415, Asn-479–Ala-481, and Asp-495 contribute to the ATP site. The tract at residues Ala-524 to Phe-547 is disordered. The segment covering Ala-535–Phe-547 has biased composition (gly residues).

It belongs to the chaperonin (HSP60) family. In terms of assembly, forms a cylinder of 14 subunits composed of two heptameric rings stacked back-to-back. Interacts with the co-chaperonin GroES.

It is found in the cytoplasm. The enzyme catalyses ATP + H2O + a folded polypeptide = ADP + phosphate + an unfolded polypeptide.. In terms of biological role, together with its co-chaperonin GroES, plays an essential role in assisting protein folding. The GroEL-GroES system forms a nano-cage that allows encapsulation of the non-native substrate proteins and provides a physical environment optimized to promote and accelerate protein folding. The polypeptide is Chaperonin GroEL (Xylella fastidiosa (strain 9a5c)).